We begin with the raw amino-acid sequence, 291 residues long: Lys-63-specific deubiquitinase BRCC36-like (291 aa).

The region spanning 12-179 is the MPN domain; that stretch reads VYLESDAFLV…YTCFQSVQAS (168 aa). Zn(2+) is bound by residues histidine 122, histidine 124, and aspartate 135. Residues 122–135 carry the JAMM motif motif; the sequence is HSHPHITVWPSHVD. Residues 259-286 adopt a coiled-coil conformation; it reads LQWLEDRLEQNQQRLQELEQEKEDLMEE.

This sequence belongs to the peptidase M67A family. BRCC36 subfamily.

Functionally, metalloprotease that specifically cleaves 'Lys-63'-linked polyubiquitin chains. This Mus musculus (Mouse) protein is Lys-63-specific deubiquitinase BRCC36-like.